The primary structure comprises 166 residues: Large ribosomal subunit protein mL49 (166 aa).

The interval 56–78 (RIPDPPKHEHYPTPSGWQPPRDP) is disordered.

It belongs to the mitochondrion-specific ribosomal protein mL49 family. Interacts with OXA1L.

The protein resides in the mitochondrion. The protein is Large ribosomal subunit protein mL49 (MRPL49) of Macaca fascicularis (Crab-eating macaque).